Here is a 968-residue protein sequence, read N- to C-terminus: Polycystin-2 (968 aa).

Residues 1-11 (MVNSSRVQPQQ) show a composition bias toward polar residues. Disordered stretches follow at residues 1–28 (MVNS…DPGR) and 58–181 (RIRQ…LPLE). Topologically, residues 1 to 219 (MVNSSRVQPQ…STNREKYLKS (219 aa)) are cytoplasmic. Over residues 62 to 83 (AAARDPPAGAAASPSPPLSSCS) the composition is skewed to low complexity. A phosphoserine mark is found at Ser76 and Ser80. Acidic residues predominate over residues 95–107 (EAEEEEEEVEGEE). Residues 123-139 (RRSAASSAVSSVGARSR) show a composition bias toward low complexity. Residue Arg137 is modified to Omega-N-methylarginine. A helical transmembrane segment spans residues 220 to 241 (VLRELVTYLLFLIVLCILTYGM). Residues 242-468 (MSSNVYYYTR…PLKLIRYVTT (227 aa)) lie on the Extracellular side of the membrane. Residues Asn299 and Asn305 are each glycosylated (N-linked (GlcNAc...) asparagine). A glycan (N-linked (GlcNAc...) (complex) asparagine) is linked at Asn328. Cysteines 331 and 344 form a disulfide. 2 N-linked (GlcNAc...) asparagine glycosylation sites follow: Asn362 and Asn375. Residues 469–489 (FDFFLAACEIIFCFFIFYYVV) form a helical membrane-spanning segment. Residues 490–505 (EEILEIRIHKLHYFRS) are Cytoplasmic-facing. Residues 506–526 (FWNCLDVVIVVLSVVAIGINI) traverse the membrane as a helical segment. Over 527–552 (YRTSNVEVLLQFLEDQNTFPNFEHLA) the chain is Extracellular. A helical membrane pass occupies residues 553-573 (YWQIQFNNIAAVTVFFVWIKL). Cholesterol is bound at residue Gln557. The Cytoplasmic segment spans residues 574 to 597 (FKFINFNRTMSQLSTTMSRCAKDL). A helical membrane pass occupies residues 598-619 (FGFAIMFFIIFLAYAQLAYLVF). Topologically, residues 620-631 (GTQVDDFSTFQE) are extracellular. The segment at residues 632–646 (CIFTQFRIILGDINF) is an intramembrane region (pore-forming). Leu641 lines the Ca(2+) pocket. The short motif at 641–643 (LGD) is the Selectivity filter element. Residues 647-654 (AEIEEANR) are Extracellular-facing. A helical membrane pass occupies residues 655–675 (VLGPIYFTTFVFFMFFILLNM). Topologically, residues 676-968 (FLAIINDTYS…GGNGSSNVHV (293 aa)) are cytoplasmic. Positions 750-785 (HTDAEIEAIFTKYDQDGDQELTEHEHQQMRDDLEKE) constitute an EF-hand domain. Asp763, Asp765, Asp767, Glu769, and Glu774 together coordinate Ca(2+). The tract at residues 764 to 831 (QDGDQELTEH…HSSRRRGSIS (68 aa)) is disordered. Basic and acidic residues predominate over residues 770–795 (LTEHEHQQMRDDLEKEREDLDLDHSS). Low complexity predominate over residues 796–807 (LPRPMSSRSFPR). Phosphoserine is present on residues Ser801, Ser808, Ser812, and Ser829. A linker region spans residues 803 to 822 (RSFPRSLDDSEEDDDEDSGH). The important for interaction with PACS1 and PACS2 stretch occupies residues 810–821 (DDSEEDDDEDSG). Residues 833–872 (GVSYEEFQVLVRRVDRMEHSIGSIVSKIDAVIVKLEIMER) adopt a coiled-coil conformation. A disordered region spans residues 917-968 (ESDDAASQISHGLGTPVGLNGQPRPRSSRPSSSQSTEGMEGAGGNGSSNVHV). The span at 938-951 (QPRPRSSRPSSSQS) shows a compositional bias: low complexity.

This sequence belongs to the polycystin family. In terms of assembly, homotetramer. Component of the heterotetrameric polycystin channel complex with PKD1; the tetramer contains one PKD1 chain and three PKD2 chains. Isoform 1 interacts with PKD1 while isoform 3 does not. Interacts with PKD1L1; probably forms a Ca(2+) channel. Interacts with CD2AP. Interacts with HAX1. Interacts with NEK8. Part of a complex containing AKAP5, ADCY5, ADCY6 and PDE4C. Interacts (via C-terminus) with TRPV4 (via C-terminus). Interacts (via C-terminal acidic region) with PACS1 and PACS2; these interactions retain the protein in the endoplasmic reticulum and prevent trafficking to the cell membrane. Interacts with TMEM33. Form a heterotetramer with TRPC1 with a 2:2 stoichiometry; has distinct channel properties separate from PKD2 or TRPC1 homomers alone. Interacts with TMEM120A; TMEM120A inhibits PKD2 channel activity through the physical association of PKD2 with TMEM120A. Interacts (via N-terminus) with RYR2; regulates RYR2 channel activity. Phosphorylated. Phosphorylation is important for protein function; a mutant that lacks the N-terminal phosphorylation sites cannot complement a zebrafish pkd2-deficient mutant. PKD-mediated phosphorylation at the C-terminus regulates its function in the release of Ca(2+) stores from the endoplasmic reticulum. Phosphorylation at Ser-812 regulates PKD2 trafficking. Phosphorylation at Ser-76 is required for PKD2 trafficking to or retention at the lateral plasma membrane. Phosphorylation at Ser-801, Ser-812 and Ser-829 regulates PKD2 channel activity. In terms of processing, N-glycosylated. The four subunits in a tetramer probably differ in the extent of glycosylation; simultaneous glycosylation of all experimentally validated sites would probably create steric hindrance. Thus, glycosylation at Asn-305 is not compatible with glycosylation at Asn-328; only one of these two residues is glycosylated at a given time. Post-translationally, sumoylated by SUMO1; sumoylation regulates PKD2 membrane recycling and is necessary for intravascular pressure-induced arterial contractility. In terms of tissue distribution, detected in fetal and adult kidney. Detected at the thick ascending limb of the loop of Henle, at distal tubules, including the distal convoluted tubule and cortical collecting tubules, with weak staining of the collecting duct. Detected on placenta syncytiotrophoblasts (at protein level). Strongly expressed in ovary, fetal and adult kidney, testis, and small intestine. Not detected in peripheral leukocytes.

Its subcellular location is the cell projection. It is found in the cilium membrane. The protein localises to the endoplasmic reticulum membrane. The protein resides in the cell membrane. It localises to the basolateral cell membrane. Its subcellular location is the cytoplasmic vesicle membrane. It is found in the golgi apparatus. The protein localises to the vesicle. The protein resides in the secreted. It localises to the extracellular exosome. It carries out the reaction K(+)(in) = K(+)(out). It catalyses the reaction Na(+)(in) = Na(+)(out). The catalysed reaction is Ca(2+)(in) = Ca(2+)(out). Channel activity is regulated by phosphorylation. Channel activity is regulated by intracellular Ca(2+). At the endoplasmic reticulum membrane (ER), TMEM33 enhances its channel activity. TMEM120A inhibits the channel activity of PKD2, and mediates mechanosensitivity of the PKD2-TMEM120A channel complex. PKD1/PKD2 complex on the plasma membrane is activated by PKD1 N-terminus. Forms a nonselective cation channel. Can function as a homotetrameric ion channel or can form heteromer with PKD1. Displays distinct function depending on its subcellular localization and regulation by its binding partners. In primary cilium functions as a cation channel, with a preference for monovalent cations over divalent cations that allows K(+), Na(+) and Ca(2+) influx, with low selectivity for Ca(2+). Involved in fluid-flow mechanosensation by the primary cilium in renal epithelium. In the endoplasmic reticulum, likely functions as a K(+) channel to facilitate Ca(2+) release. The heterotetrameric PKD1/PKD2 channel has higher Ca(2+) permeability than homomeric PKD2 channel and acts as a primarily Ca(2+)-permeable channel. Interacts with and acts as a regulator of a number of other channels, such as TRPV4, TRPC1, IP3R, RYR2, ultimately further affecting intracellular signaling, to modulate intracellular Ca(2+) signaling. Together with TRPV4, forms mechano- and thermosensitive channels in cilium. In cardiomyocytes, PKD2 modulates Ca(2+) release from stimulated RYR2 receptors through direct association. Also involved in left-right axis specification via its role in sensing nodal flow; forms a complex with PKD1L1 in cilia to facilitate flow detection in left-right patterning. Acts as a regulator of cilium length together with PKD1. Mediates systemic blood pressure and contributes to the myogenic response in cerebral arteries though vasoconstriction. The chain is Polycystin-2 from Homo sapiens (Human).